Consider the following 307-residue polypeptide: Taste receptor type 2 member 106 (307 aa).

The Extracellular portion of the chain corresponds to 1–7 (MLTIPEG). The chain crosses the membrane as a helical span at residues 8–28 (ILLCFITSGSVLGVLGNGFIL). At 29–41 (HVNCTDCVRQKFS) the chain is on the cytoplasmic side. Residues 42-62 (TTGFIFTGLAISRICVICIII) form a helical membrane-spanning segment. Residues 63 to 81 (SDGYLKLFSPHMVASDAHI) lie on the Extracellular side of the membrane. Residues 82 to 104 (IGISYLWIITNHTSTCFATILNL) traverse the membrane as a helical segment. Residues 105-124 (FYFLKIANFSHYIFFCLKRK) are Cytoplasmic-facing. Residues 125–145 (LNTIFIFLLGCLFISWSVAFP) form a helical membrane-spanning segment. The Extracellular portion of the chain corresponds to 146–179 (QTVKIFNDKMKHRNTSWKFHLHKSKFIINHILLN). Residue Asn159 is glycosylated (N-linked (GlcNAc...) asparagine). The helical transmembrane segment at 180-200 (LGVIFFCMVAIITSFLLIISL) threads the bilayer. The Cytoplasmic segment spans residues 201-227 (WKHNRKMQLYVSRFKSLNTEVHLKVMK). Residues 228-248 (VLISFIILLILHVIGILIETL) traverse the membrane as a helical segment. Residues 249-257 (SFLRYENKL) are Extracellular-facing. A helical transmembrane segment spans residues 258–278 (LLILGLNFSSMYPCCHSFILI). The Cytoplasmic segment spans residues 279-307 (LANNQLKQASLKALKQFKCHKKDKDVRET).

This sequence belongs to the G-protein coupled receptor T2R family.

The protein localises to the membrane. In terms of biological role, putative taste receptor which may play a role in the perception of bitterness. This Rattus norvegicus (Rat) protein is Taste receptor type 2 member 106.